The primary structure comprises 744 residues: Collagen alpha-1(VIII) chain (744 aa).

Residues 1–27 form the signal peptide; the sequence is MAVQPGPPQLLQVLLTISLGSIRLIQA. Positions 29-117 are nonhelical region (NC2); the sequence is AYYGIKPLPP…GKEIPLASLR (89 aa). Basic and acidic residues predominate over residues 101–110; sequence KEAVPKKGKE. Disordered stretches follow at residues 101–434 and 463–584; these read KEAV…PGLQ and EAGH…QGEY. The tract at residues 118–571 is triple-helical region; the sequence is GEQGPRGEPG…PGPPGPPGPP (454 aa). Positions 128-137 are enriched in pro residues; the sequence is PRGPPGPPGL. Residues 168–190 are compositionally biased toward low complexity; sequence KPGAMGMPGAKGEIGPKGEIGPM. A compositionally biased stretch (gly residues) spans 203-217; that stretch reads GLPGIGKPGGPGLPG. Residues 288-298 are compositionally biased toward pro residues; sequence KPGPPGEPGPQ. The span at 328 to 337 shows a compositional bias: gly residues; it reads GFPGGKGEQG. A compositionally biased stretch (pro residues) spans 389-403; it reads PGEPGLPGIPGPMGP. The segment covering 411–420 has biased composition (gly residues); the sequence is GPKGEGGIVG. Low complexity-rich tracts occupy residues 469–506 and 540–556; these read LPGLPGVPGLLGPKGEPGIPGDQGLQGPPGIPGITGPS and LHGPPGKPGALGPQGQP. Over residues 558–579 the composition is skewed to pro residues; it reads LPGPPGPPGPPGPPAVMPPTPA. The nonhelical region (NC1) stretch occupies residues 572-744; sequence AVMPPTPAPQ…SFSGYLLYPM (173 aa). Residues 611–744 form the C1q domain; that stretch reads PAYEMPAFTA…SFSGYLLYPM (134 aa).

As to quaternary structure, homotrimers, or heterotrimers in association with alpha 2(VIII) type collagens. Four homotrimers can form a tetrahedron stabilized by central interacting C-terminal NC1 trimers. Post-translationally, prolines at the third position of the tripeptide repeating unit (G-X-Y) are hydroxylated in some or all of the chains.

The protein localises to the secreted. It is found in the extracellular space. The protein resides in the extracellular matrix. Its subcellular location is the basement membrane. In terms of biological role, macromolecular component of the subendothelium. Major component of the Descemet's membrane (basement membrane) of corneal endothelial cells. Also a component of the endothelia of blood vessels. Necessary for migration and proliferation of vascular smooth muscle cells and thus, has a potential role in the maintenance of vessel wall integrity and structure, in particular in atherogenesis. This Gallus gallus (Chicken) protein is Collagen alpha-1(VIII) chain (COL8A1).